The primary structure comprises 169 residues: Ubiquitin-fold modifier-conjugating enzyme 1 (169 aa).

Residue Cys116 is the Glycyl thioester intermediate of the active site.

The protein belongs to the ubiquitin-conjugating enzyme family. UFC1 subfamily.

E2-like enzyme which forms an intermediate with UFM1 via a thioester linkage. The sequence is that of Ubiquitin-fold modifier-conjugating enzyme 1 from Nematostella vectensis (Starlet sea anemone).